A 369-amino-acid polypeptide reads, in one-letter code: uncharacterized protein (369 aa).

Residues 1–19 (MKKLIAVAVLSACGSLAHA) form the signal peptide.

This is an uncharacterized protein from Haemophilus influenzae (strain ATCC 51907 / DSM 11121 / KW20 / Rd).